The chain runs to 192 residues: Probable nicotinate-nucleotide adenylyltransferase (192 aa).

This sequence belongs to the NadD family.

The enzyme catalyses nicotinate beta-D-ribonucleotide + ATP + H(+) = deamido-NAD(+) + diphosphate. It functions in the pathway cofactor biosynthesis; NAD(+) biosynthesis; deamido-NAD(+) from nicotinate D-ribonucleotide: step 1/1. Functionally, catalyzes the reversible adenylation of nicotinate mononucleotide (NaMN) to nicotinic acid adenine dinucleotide (NaAD). In Rhizobium leguminosarum bv. trifolii (strain WSM2304), this protein is Probable nicotinate-nucleotide adenylyltransferase.